Here is a 428-residue protein sequence, read N- to C-terminus: Beta-1,3-galactosyl-O-glycosyl-glycoprotein beta-1,6-N-acetylglucosaminyltransferase (428 aa).

At 1–9 (MLRNLFRRR) the chain is on the cytoplasmic side. The segment at 5–9 (LFRRR) is mediates interaction with GOLPH3 and is necessary and sufficient for localization to the Golgi. Residues 10-32 (LFSCPTKYYFMLLVLSLITFSVL) traverse the membrane as a helical; Signal-anchor for type II membrane protein segment. The tract at residues 33-121 (RIHQKPEFFS…EPLTKEEVGF (89 aa)) is stem region. At 33 to 428 (RIHQKPEFFS…RHKALENLEH (396 aa)) the chain is on the lumenal side. Residues asparagine 58 and asparagine 95 are each glycosylated (N-linked (GlcNAc...) asparagine). Disulfide bonds link cysteine 59–cysteine 413, cysteine 100–cysteine 172, cysteine 151–cysteine 199, and cysteine 372–cysteine 381. Positions 122–428 (PIAYSIVVHH…RHKALENLEH (307 aa)) are catalytic. UDP-N-acetyl-alpha-D-glucosamine-binding positions include 128-130 (VVH), 155-157 (DRK), and tyrosine 187. A glycoprotein is bound by residues glutamate 243, asparagine 250, lysine 251, arginine 254, glutamate 320, lysine 341, and tyrosine 358. Glutamate 320 acts as the Nucleophile in catalysis. Residues arginine 378 and lysine 401 each contribute to the UDP-N-acetyl-alpha-D-glucosamine site.

This sequence belongs to the glycosyltransferase 14 family. As to quaternary structure, interacts with GOLPH3; may control GCNT1 retention in the Golgi. Post-translationally, N-glycosylated. As to expression, expressed in kidney, liver, stomach, spleen, lung and brain.

It localises to the golgi apparatus membrane. The catalysed reaction is a 3-O-[beta-D-galactosyl-(1-&gt;3)-N-acetyl-alpha-D-galactosaminyl]-L-seryl-[protein] + UDP-N-acetyl-alpha-D-glucosamine = 3-O-{beta-D-galactosyl-(1-&gt;3)-[N-acetyl-beta-D-glucosaminyl-(1-&gt;6)]-N-acetyl-alpha-D-galactosaminyl}-L-seryl-[protein] + UDP + H(+). It carries out the reaction a 3-O-[beta-D-galactosyl-(1-&gt;3)-N-acetyl-alpha-D-galactosaminyl]-L-threonyl-[protein] + UDP-N-acetyl-alpha-D-glucosamine = a 3-O-{beta-D-galactosyl-(1-&gt;3)-[N-acetyl-beta-D-glucosaminyl-(1-&gt;6)]-N-acetyl-alpha-D-galactosaminyl}-L-threonyl-[protein] + UDP + H(+). The enzyme catalyses a globoside GalGb4Cer + UDP-N-acetyl-alpha-D-glucosamine = a globoside GlcNAc-(beta1-&gt;6)-GalGb4Cer + UDP + H(+). It catalyses the reaction a ganglioside GA1 + UDP-N-acetyl-alpha-D-glucosamine = a ganglioside beta-D-GlcNAc-(1-&gt;6)-GA1 + UDP + H(+). Its pathway is protein modification; protein glycosylation. The protein operates within glycolipid biosynthesis. Its activity is regulated as follows. Inactivated by thiol-reactive agents. Inhibited by free UDP. In terms of biological role, glycosyltransferase that catalyzes the transfer of an N-acetylglucosamine (GlcNAc) moiety in beta1-6 linkage from UDP-GlcNAc onto mucin-type core 1 O-glycan to form the branched mucin-type core 2 O-glycan. The catalysis is metal ion-independent and occurs with inversion of the anomeric configuration of sugar donor. Selectively involved in synthesis of mucin-type core 2 O-glycans that serve as scaffolds for the display of selectin ligand sialyl Lewis X epitope by myeloid cells, with an impact on homeostasis and recruitment to inflammatory sites. Can also act on glycolipid substrates. Transfers GlcNAc moiety to GalGb4Cer globosides in a reaction step to the synthesis of stage-specific embryonic antigen 1 (SSEA-1) determinant. Can use Galbeta1-3GalNAcalpha1-R and Galbeta1-3GalNAcbeta1-R oligosaccharide derivatives as acceptor substrates. This Mus musculus (Mouse) protein is Beta-1,3-galactosyl-O-glycosyl-glycoprotein beta-1,6-N-acetylglucosaminyltransferase (Gcnt1).